Consider the following 540-residue polypeptide: GMP synthase [glutamine-hydrolyzing] (540 aa).

A Glutamine amidotransferase type-1 domain is found at 26-216 (LIIILDFGSQ…VYHICDCEPT (191 aa)). C103 (nucleophile) is an active-site residue. Catalysis depends on residues H190 and E192. Positions 217 to 415 (WTTAAFVEEA…IGLPEEIVQR (199 aa)) constitute a GMPS ATP-PPase domain. 244–250 (SGGVDSS) provides a ligand contact to ATP.

In terms of assembly, homodimer.

It catalyses the reaction XMP + L-glutamine + ATP + H2O = GMP + L-glutamate + AMP + diphosphate + 2 H(+). Its pathway is purine metabolism; GMP biosynthesis; GMP from XMP (L-Gln route): step 1/1. Catalyzes the synthesis of GMP from XMP. This Nostoc punctiforme (strain ATCC 29133 / PCC 73102) protein is GMP synthase [glutamine-hydrolyzing].